The following is a 406-amino-acid chain: 4-hydroxy-3-methylbut-2-en-1-yl diphosphate synthase (ferredoxin) (406 aa).

C313, C316, C347, and E354 together coordinate [4Fe-4S] cluster.

This sequence belongs to the IspG family. Requires [4Fe-4S] cluster as cofactor.

The catalysed reaction is (2E)-4-hydroxy-3-methylbut-2-enyl diphosphate + 2 oxidized [2Fe-2S]-[ferredoxin] + H2O = 2-C-methyl-D-erythritol 2,4-cyclic diphosphate + 2 reduced [2Fe-2S]-[ferredoxin] + H(+). It participates in isoprenoid biosynthesis; isopentenyl diphosphate biosynthesis via DXP pathway; isopentenyl diphosphate from 1-deoxy-D-xylulose 5-phosphate: step 5/6. In terms of biological role, converts 2C-methyl-D-erythritol 2,4-cyclodiphosphate (ME-2,4cPP) into 1-hydroxy-2-methyl-2-(E)-butenyl 4-diphosphate. This chain is 4-hydroxy-3-methylbut-2-en-1-yl diphosphate synthase (ferredoxin), found in Picosynechococcus sp. (strain ATCC 27264 / PCC 7002 / PR-6) (Agmenellum quadruplicatum).